The primary structure comprises 91 residues: Dynein 8 kDa light chain, flagellar outer arm (91 aa).

It belongs to the dynein light chain family. Consists of at least 3 heavy chains (alpha, beta and gamma), 2 intermediate chains and 8 light chains.

The protein localises to the cytoplasm. Its subcellular location is the cytoskeleton. The protein resides in the flagellum axoneme. The chain is Dynein 8 kDa light chain, flagellar outer arm from Chlamydomonas reinhardtii (Chlamydomonas smithii).